The sequence spans 84 residues: Large ribosomal subunit protein bL27 (84 aa).

Residues Met1–Gly22 form a disordered region.

This sequence belongs to the bacterial ribosomal protein bL27 family.

This is Large ribosomal subunit protein bL27 from Shewanella pealeana (strain ATCC 700345 / ANG-SQ1).